We begin with the raw amino-acid sequence, 213 residues long: Orotate phosphoribosyltransferase (213 aa).

Lys-26 contacts 5-phospho-alpha-D-ribose 1-diphosphate. Residue Phe-34–Phe-35 coordinates orotate. Residues Tyr-72–Lys-73, Arg-99, Lys-100, Lys-103, His-105, and Asp-124–Ala-132 each bind 5-phospho-alpha-D-ribose 1-diphosphate. Positions 128 and 156 each coordinate orotate.

This sequence belongs to the purine/pyrimidine phosphoribosyltransferase family. PyrE subfamily. In terms of assembly, homodimer. Requires Mg(2+) as cofactor.

It carries out the reaction orotidine 5'-phosphate + diphosphate = orotate + 5-phospho-alpha-D-ribose 1-diphosphate. Its pathway is pyrimidine metabolism; UMP biosynthesis via de novo pathway; UMP from orotate: step 1/2. Its function is as follows. Catalyzes the transfer of a ribosyl phosphate group from 5-phosphoribose 1-diphosphate to orotate, leading to the formation of orotidine monophosphate (OMP). The chain is Orotate phosphoribosyltransferase from Enterobacter sp. (strain 638).